A 283-amino-acid chain; its full sequence is Transmembrane protein 119 (283 aa).

A signal peptide spans 1 to 25 (MVSAAAPSLLILLLLLLGSVPATDA). Residues 26-96 (RSVPLKATFL…IVDFFRQYVM (71 aa)) are Extracellular-facing. Ser41 carries an O-linked (Xyl...) (chondroitin sulfate) serine glycan. The span at 43–52 (EAEGSSASSP) shows a compositional bias: low complexity. The tract at residues 43–76 (EAEGSSASSPSLPPPWTPALSPTSMGPQPITLGG) is disordered. The chain crosses the membrane as a helical span at residues 97–117 (LIAVVGSLAFLLMFIVCAAVI). The Cytoplasmic segment spans residues 118 to 283 (TRQKQKASAY…CACSSVHPSV (166 aa)). Disordered regions lie at residues 136-168 (KYVD…ALDS) and 183-283 (LKSP…HPSV). Basic and acidic residues-rich tracts occupy residues 153–164 (VPDRAPDSRPEE) and 198–213 (RMVE…KGSQ). Residues 238 to 264 (GVLEGAVVAGEGQGELEGSLLLAQEAQ) show a composition bias toward low complexity. Ser272 is subject to Phosphoserine.

As to quaternary structure, interacts with SMAD1, SMAD5 and RUNX2. As to expression, expressed in brain microglia (at protein level). Detected in urine (at protein level). Elevated expression levels seen in the brain of patients with Alzheimer disease. Expressed by osteoblast-like cells in bone tissues and follicular dendritic cells in lymphoid tissues.

Its subcellular location is the cell membrane. It localises to the cytoplasm. The protein resides in the endoplasmic reticulum membrane. It is found in the secreted. Its function is as follows. Plays an important role in bone formation and normal bone mineralization. Promotes the differentiation of myoblasts into osteoblasts. May induce the commitment and differentiation of myoblasts into osteoblasts through an enhancement of BMP2 production and interaction with the BMP-RUNX2 pathway. Up-regulates the expression of ATF4, a transcription factor which plays a central role in osteoblast differentiation. Essential for normal spermatogenesis and late testicular differentiation. This chain is Transmembrane protein 119 (TMEM119), found in Homo sapiens (Human).